The primary structure comprises 100 residues: Enhancer of yellow 2 transcription factor (100 aa).

Belongs to the ENY2 family. In terms of assembly, component of the nuclear pore complex (NPC)-associated AMEX complex (anchoring and mRNA export complex), composed of at least e(y)2 and xmas-2. Component of the SAGA transcription coactivator-HAT complexes, at least composed of Ada2b, e(y)2, Pcaf/Gcn5, Taf10 and Nipped-A/Trrap. Within the SAGA complex, e(y)2, Sgf11, and not/nonstop form an additional subcomplex of SAGA called the DUB module (deubiquitination module). Component of the THO complex, composed of at least e(y)2, HPR1, THO2, THOC5, THOC6 and THOC7. Interacts with e(y)1. Interacts with su(Hw) (via zinc fingers). Interacts with xmas-2; required for localization to the nuclear periphery. Interacts with the nuclear pore complex (NPC).

Its subcellular location is the nucleus. It is found in the nucleoplasm. It localises to the cytoplasm. Its function is as follows. Involved in mRNA export coupled transcription activation by association with both the AMEX and the SAGA complexes. The SAGA complex is a multiprotein complex that activates transcription by remodeling chromatin and mediating histone acetylation and deubiquitination. Within the SAGA complex, participates in a subcomplex that specifically deubiquitinates histone H2B. The SAGA complex is recruited to specific gene promoters by activators, where it is required for transcription. Required for nuclear receptor-mediated transactivation. Involved in transcription elongation by recruiting the THO complex onto nascent mRNA. The AMEX complex functions in docking export-competent ribonucleoprotein particles (mRNPs) to the nuclear entrance of the nuclear pore complex (nuclear basket). AMEX participates in mRNA export and accurate chromatin positioning in the nucleus by tethering genes to the nuclear periphery. The sequence is that of Enhancer of yellow 2 transcription factor from Drosophila persimilis (Fruit fly).